A 365-amino-acid chain; its full sequence is Green-sensitive opsin P521 (365 aa).

Residues 1-51 (MTEAWNVAVFAARRSRDDDDTTRGSVFTYTNTNNTRGPFEGPNYHIAPRWV) are Extracellular-facing. N-linked (GlcNAc...) asparagine glycosylation occurs at asparagine 33. A helical membrane pass occupies residues 52 to 76 (YNLVSFFMIIVVIASCFTNGLVLVA). The Cytoplasmic segment spans residues 77–88 (TAKFKKLRHPLN). Residues 89-113 (WILVNLAFVDLVETLVASTISVFNQ) traverse the membrane as a helical segment. At 114-128 (IFGYFILGHPLCVIE) the chain is on the extracellular side. The cysteines at positions 125 and 202 are disulfide-linked. Residues 129 to 148 (GYVVSSCGITGLWSLAIISW) form a helical membrane-spanning segment. The Cytoplasmic portion of the chain corresponds to 149–167 (ERWFVVCKPFGNIKFDSKL). The helical transmembrane segment at 168–191 (AIIGIVFSWVWAWGWSAPPIFGWS) threads the bilayer. Over 192-217 (RYWPHGLKTSCGPDVFSGSVELGCQS) the chain is Extracellular. The chain crosses the membrane as a helical span at residues 218–245 (FMLTLMITCCFLPLFIIIVCYLQVWMAI). Over 246–267 (RAVAAQQKESESTQKAEREVSR) the chain is Cytoplasmic. Residues 268 to 291 (MVVVMIVAFCICWGPYASFVSFAA) traverse the membrane as a helical segment. Topologically, residues 292–299 (ANPGYAFH) are extracellular. Residues 300–324 (PLAAALPAYFAKSATIYNPVIYVFM) traverse the membrane as a helical segment. Position 311 is an N6-(retinylidene)lysine (lysine 311). Residues 325–365 (NRQFRNCIMQLFGKKVDDGSEASTTSRTEVSSVSNSSVAPA) are Cytoplasmic-facing. The segment at 342–365 (DGSEASTTSRTEVSSVSNSSVAPA) is disordered. A compositionally biased stretch (low complexity) spans 345-365 (EASTTSRTEVSSVSNSSVAPA).

It belongs to the G-protein coupled receptor 1 family. Opsin subfamily. In terms of processing, phosphorylated on some or all of the serine and threonine residues present in the C-terminal region. As to expression, in this lizard the color pigments are found in the rod-shaped photoreceptor cells which have been derived from ancestral cone-like photoreceptors.

The protein localises to the membrane. Visual pigments are the light-absorbing molecules that mediate vision. They consist of an apoprotein, opsin, covalently linked to cis-retinal. The chain is Green-sensitive opsin P521 from Gekko gecko (Tokay gecko).